Reading from the N-terminus, the 202-residue chain is Nucleoside triphosphate pyrophosphatase (202 aa).

The Proton acceptor role is filled by Asp79.

The protein belongs to the Maf family. A divalent metal cation is required as a cofactor.

It is found in the cytoplasm. The enzyme catalyses a ribonucleoside 5'-triphosphate + H2O = a ribonucleoside 5'-phosphate + diphosphate + H(+). It carries out the reaction a 2'-deoxyribonucleoside 5'-triphosphate + H2O = a 2'-deoxyribonucleoside 5'-phosphate + diphosphate + H(+). In terms of biological role, nucleoside triphosphate pyrophosphatase. May have a dual role in cell division arrest and in preventing the incorporation of modified nucleotides into cellular nucleic acids. The sequence is that of Nucleoside triphosphate pyrophosphatase from Nitrobacter winogradskyi (strain ATCC 25391 / DSM 10237 / CIP 104748 / NCIMB 11846 / Nb-255).